A 424-amino-acid chain; its full sequence is Zinc finger protein 597 (424 aa).

Positions 14-88 constitute a KRAB domain; the sequence is ILFEDLAVYF…KYPIAAPLVP (75 aa). C2H2-type zinc fingers lie at residues 156-178, 184-206, 212-234, and 240-262; these read YKCP…QKIH, HKCG…RRIH, YKCA…MNSH, and YTCS…QKSH. Residue lysine 300 forms a Glycyl lysine isopeptide (Lys-Gly) (interchain with G-Cter in SUMO2) linkage. C2H2-type zinc fingers lie at residues 341-363, 369-391, and 397-419; these read LQCP…QNIH, HKCK…QKSH, and FKCT…KRTH.

The protein belongs to the krueppel C2H2-type zinc-finger protein family.

The protein resides in the nucleus. May be involved in transcriptional regulation. The protein is Zinc finger protein 597 (ZNF597) of Homo sapiens (Human).